Reading from the N-terminus, the 322-residue chain is Beta-ketoacyl-[acyl-carrier-protein] synthase III (322 aa).

Residues Cys-113 and His-249 contribute to the active site. Positions 250-254 are ACP-binding; it reads QANIR. Asn-279 is a catalytic residue.

The protein belongs to the thiolase-like superfamily. FabH family. Homodimer.

It localises to the cytoplasm. It catalyses the reaction malonyl-[ACP] + acetyl-CoA + H(+) = 3-oxobutanoyl-[ACP] + CO2 + CoA. It participates in lipid metabolism; fatty acid biosynthesis. Its function is as follows. Catalyzes the condensation reaction of fatty acid synthesis by the addition to an acyl acceptor of two carbons from malonyl-ACP. Catalyzes the first condensation reaction which initiates fatty acid synthesis and may therefore play a role in governing the total rate of fatty acid production. Possesses both acetoacetyl-ACP synthase and acetyl transacylase activities. Its substrate specificity determines the biosynthesis of branched-chain and/or straight-chain of fatty acids. This chain is Beta-ketoacyl-[acyl-carrier-protein] synthase III, found in Thioalkalivibrio sulfidiphilus (strain HL-EbGR7).